The primary structure comprises 878 residues: Leucine--tRNA ligase (878 aa).

The 'HIGH' region motif lies at 56 to 66 (PYPSGKLHMGH). The 'KMSKS' region motif lies at 630–634 (KMSKS). Lys-633 provides a ligand contact to ATP.

This sequence belongs to the class-I aminoacyl-tRNA synthetase family.

It is found in the cytoplasm. The catalysed reaction is tRNA(Leu) + L-leucine + ATP = L-leucyl-tRNA(Leu) + AMP + diphosphate. The sequence is that of Leucine--tRNA ligase from Prochlorococcus marinus (strain MIT 9303).